We begin with the raw amino-acid sequence, 245 residues long: uncharacterized protein (245 aa).

Basic and acidic residues predominate over residues 162 to 174 (KEQSDVTTSERTR). Residues 162 to 183 (KEQSDVTTSERTRSPPGSSKTT) form a disordered region.

This is an uncharacterized protein from Homo sapiens (Human).